Here is a 446-residue protein sequence, read N- to C-terminus: N-succinylarginine dihydrolase (446 aa).

Residues 21-30 (AGLSWGNVAS), N112, and 139-140 (HR) each bind substrate. E176 is a catalytic residue. R216 contacts substrate. The active site involves H252. D254 and N364 together coordinate substrate. The Nucleophile role is filled by C370.

The protein belongs to the succinylarginine dihydrolase family. In terms of assembly, homodimer.

It catalyses the reaction N(2)-succinyl-L-arginine + 2 H2O + 2 H(+) = N(2)-succinyl-L-ornithine + 2 NH4(+) + CO2. It functions in the pathway amino-acid degradation; L-arginine degradation via AST pathway; L-glutamate and succinate from L-arginine: step 2/5. Catalyzes the hydrolysis of N(2)-succinylarginine into N(2)-succinylornithine, ammonia and CO(2). This chain is N-succinylarginine dihydrolase, found in Marinobacter nauticus (strain ATCC 700491 / DSM 11845 / VT8) (Marinobacter aquaeolei).